The following is a 231-amino-acid chain: NADH-ubiquinone oxidoreductase chain 4 (231 aa).

6 helical membrane-spanning segments follow: residues 1–21 (PIAG…YGII), 34–54 (LFIP…LTCL), 61–80 (SLIA…AITI), 84–106 (WGLS…LFCL), 118–138 (VLIL…WWLL), and 156–178 (LLIM…LSML).

The protein belongs to the complex I subunit 4 family.

It localises to the mitochondrion membrane. The catalysed reaction is a ubiquinone + NADH + 5 H(+)(in) = a ubiquinol + NAD(+) + 4 H(+)(out). Its function is as follows. Core subunit of the mitochondrial membrane respiratory chain NADH dehydrogenase (Complex I) that is believed to belong to the minimal assembly required for catalysis. Complex I functions in the transfer of electrons from NADH to the respiratory chain. The immediate electron acceptor for the enzyme is believed to be ubiquinone. This is NADH-ubiquinone oxidoreductase chain 4 (MT-ND4) from Azemiops feae (Fea's viper).